A 504-amino-acid chain; its full sequence is Hydroxyisobutyraldehyde dehydrogenase (504 aa).

Residue glutamate 260 is the Proton acceptor of the active site. Residue cysteine 294 is the Nucleophile of the active site.

It belongs to the aldehyde dehydrogenase family.

It localises to the cytoplasm. The catalysed reaction is 2-hydroxy-2-methylpropanal + NAD(+) + H2O = 2-hydroxy-2-methylpropanoate + NADH + 2 H(+). Its function is as follows. Involved in the degradation of methyl tert-butyl ether (MTBE). Catalyzes the conversion of hydroxyisobutyraldehyde to hydroxyisobutyric acid (HIBA). The chain is Hydroxyisobutyraldehyde dehydrogenase from Mycolicibacterium austroafricanum (Mycobacterium austroafricanum).